We begin with the raw amino-acid sequence, 455 residues long: Bleomycin hydrolase (455 aa).

Met-1 is subject to N-acetylmethionine. Residues Cys-73 and His-372 contribute to the active site. Position 391 is an N6-acetyllysine (Lys-391). The active site involves Asn-396.

The protein belongs to the peptidase C1 family. In terms of assembly, homohexamer. Interacts with NUDT12 (via ANK repeats).

It is found in the cytoplasm. The protein resides in the cytoplasmic granule. The enzyme catalyses Inactivates bleomycin B2 (a cytotoxic glycometallopeptide) by hydrolysis of a carboxyamide bond of beta-aminoalanine, but also shows general aminopeptidase activity. The specificity varies somewhat with source, but amino acid arylamides of Met, Leu and Ala are preferred.. In terms of biological role, the normal physiological role of BLM hydrolase is unknown, but it catalyzes the inactivation of the antitumor drug BLM (a glycopeptide) by hydrolyzing the carboxamide bond of its B-aminoalaninamide moiety thus protecting normal and malignant cells from BLM toxicity. The polypeptide is Bleomycin hydrolase (BLMH) (Homo sapiens (Human)).